Reading from the N-terminus, the 707-residue chain is SPX domain-containing membrane protein At4g11810 (707 aa).

Residues 2 to 145 form the SPX domain; that stretch reads VAFGKKLKER…GYRFTNYYVK (144 aa). The next 6 membrane-spanning stretches (helical) occupy residues 252–272, 283–303, 320–340, 342–361, 380–400, and 416–436; these read FMSL…TYII, LGAA…AQLF, LIFS…AYDF, SLAL…ARAV, AGFV…AGLL, and LPGW…AISF. The span at 481-498 shows a compositional bias: acidic residues; the sequence is EETEHDEEDDGDGSEESS. The interval 481–503 is disordered; it reads EETEHDEEDDGDGSEESSDDSRK. 5 helical membrane passes run 523 to 543, 557 to 577, 586 to 606, 614 to 634, and 679 to 699; these read LLIY…SSVV, IFLF…GSYI, ILLA…HVVI, VISG…NLSL, and MLLN…ILAT.

It belongs to the major facilitator superfamily.

Its subcellular location is the membrane. This chain is SPX domain-containing membrane protein At4g11810, found in Arabidopsis thaliana (Mouse-ear cress).